A 1330-amino-acid chain; its full sequence is Nephrocystin-3 (1330 aa).

Gly2 carries the N-myristoyl glycine lipid modification. Residues Glu83–Val207 adopt a coiled-coil conformation. TPR repeat units lie at residues Ile471–Leu504, Cys885–Met918, Thr920–Leu942, Ala943–Ala976, Ala985–Ala1018, Ala1027–Ala1060, Ala1093–Val1126, Ala1135–Ala1168, Ala1177–Ser1210, Ala1219–Ser1252, and Gly1261–Glu1294. Positions Ser1296–Arg1330 are disordered. Residues Arg1305–Arg1330 are compositionally biased toward polar residues.

As to quaternary structure, interacts with NPHP1 and INVS/NPHP2. Interacts (when myristoylated) with UNC119 and UNC119B; interaction is required for localization to cilium. Interacts with CEP164. Component of a complex containing at least ANKS6, INVS, NEK8 and NPHP3. ANKS6 may organize complex assembly by linking INVS and NPHP3 to NEK8 and INVS may target the complex to the proximal ciliary axoneme. In terms of tissue distribution, widely expressed at low level. Expressed in heart, placenta, liver, skeletal muscle, kidney and pancreas. Expressed at very low level in brain and lung.

The protein resides in the cell projection. The protein localises to the cilium. Its function is as follows. Required for normal ciliary development and function. Inhibits disheveled-1-induced canonical Wnt-signaling activity and may also play a role in the control of non-canonical Wnt signaling which regulates planar cell polarity. Probably acts as a molecular switch between different Wnt signaling pathways. Required for proper convergent extension cell movements. This is Nephrocystin-3 (NPHP3) from Homo sapiens (Human).